The following is a 953-amino-acid chain: Translation initiation factor IF-2 (953 aa).

Disordered regions lie at residues 52–247 (KASK…LAEL) and 279–363 (TKLK…TERK). 3 stretches are compositionally biased toward basic and acidic residues: residues 80–89 (TGSEHVEKTQ), 98–111 (FKAE…EQAA), and 140–188 (QGDK…ENHK). The segment covering 191 to 207 (RFTNQKKQGRQEPQSKS) has biased composition (polar residues). Residues 229–247 (RQSETRFRAQQEAKRLAEL) show a composition bias toward basic and acidic residues. Residues 282 to 291 (KSSNISAKST) are compositionally biased toward polar residues. A compositionally biased stretch (basic and acidic residues) spans 300 to 317 (ARPEKNRELTHHSQEGQK). Residues 322–338 (SWNSQNQVRNQKNSNWN) show a composition bias toward low complexity. Residues 339-348 (KNKKTKKGKN) show a composition bias toward basic residues. Residues 454–623 (ERAPVVTIMG…LLVAEVEELK (170 aa)) enclose the tr-type G domain. The G1 stretch occupies residues 463-470 (GHVDHGKT). Position 463–470 (463–470 (GHVDHGKT)) interacts with GTP. The segment at 488-492 (GITQH) is G2. The G3 stretch occupies residues 509 to 512 (DTPG). GTP-binding positions include 509-513 (DTPGH) and 563-566 (NKID). The interval 563-566 (NKID) is G4. Positions 599-601 (SAK) are G5.

Belongs to the TRAFAC class translation factor GTPase superfamily. Classic translation factor GTPase family. IF-2 subfamily.

It is found in the cytoplasm. One of the essential components for the initiation of protein synthesis. Protects formylmethionyl-tRNA from spontaneous hydrolysis and promotes its binding to the 30S ribosomal subunits. Also involved in the hydrolysis of GTP during the formation of the 70S ribosomal complex. The chain is Translation initiation factor IF-2 from Streptococcus pyogenes serotype M5 (strain Manfredo).